Consider the following 545-residue polypeptide: MTELTQQATWQALEKHSKTLSHMRELFSTEPQRFNDMSTQACGLFLDYSKNRASQETMSLLFKLAKDTQLESKIKAMFAGEAINNTEQRAVLHTALRAPADKVIIVDGNNIVAEVQQTLAKMSEFVESLTSGSWKGYTGKAITDVVSIGIGGSFLGPKIVSQALRPYWTGELNCHFVANVDGTSITEKLKGLDPQTTLFVMSSKSFGTQETLTNTLTAKAWFLGQGASQSDVAKHFVAVSSNVAKATEFGIDADNIFPMWDWVGGRYSLWSAIGLPIALLIGMDNFRELLAGAHEMDEHFANTPLEDNMPVIMGLFSLWYGNFFNAQSHVVLTYDHYLRGLPAYFQQLDMESNGKSVTLNGTDVDYSTGPVIWGGEGTNGQHAYHQLLHQGTALIPADFIMPLNSHNPVGEHHVQLASNCFGQTQALMQGRTYEEALAELSSSSLNDEQKQLIAKHKVMPGNKPSNTILMDKLTPSTLGALIALYEHRTFVQGAIWQINSFDQWGVELGKQLGNDVLDRLTASKDADELDTSSNGLINLFRQGNI.

The active-site Proton donor is the E351. Active-site residues include H382 and K510.

The protein belongs to the GPI family.

The protein localises to the cytoplasm. It catalyses the reaction alpha-D-glucose 6-phosphate = beta-D-fructose 6-phosphate. It participates in carbohydrate biosynthesis; gluconeogenesis. It functions in the pathway carbohydrate degradation; glycolysis; D-glyceraldehyde 3-phosphate and glycerone phosphate from D-glucose: step 2/4. In terms of biological role, catalyzes the reversible isomerization of glucose-6-phosphate to fructose-6-phosphate. This chain is Glucose-6-phosphate isomerase, found in Shewanella halifaxensis (strain HAW-EB4).